Consider the following 91-residue polypeptide: Small ribosomal subunit protein bS16 (91 aa).

It belongs to the bacterial ribosomal protein bS16 family.

The polypeptide is Small ribosomal subunit protein bS16 (Levilactobacillus brevis (strain ATCC 367 / BCRC 12310 / CIP 105137 / JCM 1170 / LMG 11437 / NCIMB 947 / NCTC 947) (Lactobacillus brevis)).